The following is a 139-amino-acid chain: Small ribosomal subunit protein uS12 (139 aa).

Aspartate 102 is subject to 3-methylthioaspartic acid.

Belongs to the universal ribosomal protein uS12 family. Part of the 30S ribosomal subunit. Contacts proteins S8 and S17. May interact with IF1 in the 30S initiation complex.

Functionally, with S4 and S5 plays an important role in translational accuracy. Interacts with and stabilizes bases of the 16S rRNA that are involved in tRNA selection in the A site and with the mRNA backbone. Located at the interface of the 30S and 50S subunits, it traverses the body of the 30S subunit contacting proteins on the other side and probably holding the rRNA structure together. The combined cluster of proteins S8, S12 and S17 appears to hold together the shoulder and platform of the 30S subunit. This chain is Small ribosomal subunit protein uS12, found in Mycoplasma capricolum subsp. capricolum (strain California kid / ATCC 27343 / NCTC 10154).